A 3993-amino-acid polypeptide reads, in one-letter code: Intermembrane lipid transfer protein VPS13B (3993 aa).

Residues 2-102 (LESYVTPILM…KDGIQDDHES (101 aa)) form the Chorein N-terminal domain. Residues 100–133 (HESCGSNSTNRSTAENTKSSIKPRRIQQAAPADP) form a disordered region. Over residues 103–119 (CGSNSTNRSTAENTKSS) the composition is skewed to polar residues. Phosphoserine is present on residues serine 413, serine 998, serine 1001, and serine 1032. Disordered stretches follow at residues 1262–1303 (SPVW…PFSD), 1616–1637 (DQLKPEKGSGSGGVPTESERNS), and 1735–1770 (TKATEISKQEQKKVDTFDGGTAETSSRYSGAQDSGI). Positions 1264–1291 (VWSSVGTAPPDTSTCSPSADIGTTTEGD) are enriched in polar residues. Residues 1739–1750 (EISKQEQKKVDT) are compositionally biased toward basic and acidic residues. Polar residues predominate over residues 1756-1770 (AETSSRYSGAQDSGI). The residue at position 1789 (serine 1789) is a Phosphoserine. The disordered stretch occupies residues 2048-2067 (HSSAHSKETSTPSDSILNMD). The SHR-BD domain occupies 2604–2683 (HFVICNDTQE…TIQYKGRTAS (80 aa)). The tract at residues 3880–3993 (AFPITEISCA…KNKALRKGFS (114 aa)) is localizes the protein to the Golgi apparatus.

Belongs to the VPS13 family. As to quaternary structure, interacts with STX6. Interacts with STX12 (via N-terminus). Interacts with RAB6A isoform 1 (GTP-bound) and isoform 2 (GTP-bound). Interacts with RAB6B (GTP-bound). In terms of tissue distribution, ubiquitously expressed in all examined tissues.

It localises to the recycling endosome membrane. Its subcellular location is the cytoplasmic vesicle. The protein resides in the secretory vesicle. The protein localises to the acrosome membrane. It is found in the golgi apparatus. It localises to the cis-Golgi network membrane. Its subcellular location is the endoplasmic reticulum-Golgi intermediate compartment membrane. The protein resides in the trans-Golgi network membrane. The protein localises to the early endosome membrane. It is found in the lysosome membrane. Its function is as follows. Mediates the transfer of lipids between membranes at organelle contact sites. Binds phosphatidylinositol 3-phosphate. Functions as a tethering factor in the slow endocytic recycling pathway, to assist traffic between early and recycling endosomes. Involved in the transport of proacrosomal vesicles to the nuclear dense lamina (NDL) during spermatid development. Plays a role in the assembly of the Golgi apparatus, possibly by mediating trafficking to the Golgi membrane. Plays a role in the development of the nervous system, and may be required for neuron projection development. May also play a role during adipose tissue development. Required for maintenance of the ocular lens. Required for proper organization of the Golgi. This is Intermembrane lipid transfer protein VPS13B from Mus musculus (Mouse).